A 362-amino-acid chain; its full sequence is Adenosine deaminase (362 aa).

Zn(2+) is bound by residues His-19 and His-21. Substrate-binding residues include His-21, Asp-23, and Gly-181. His-208 provides a ligand contact to Zn(2+). Glu-211 acts as the Proton donor in catalysis. Asp-300 serves as a coordination point for Zn(2+).

Belongs to the metallo-dependent hydrolases superfamily. Adenosine and AMP deaminases family. Adenosine deaminase subfamily. The cofactor is Zn(2+).

The enzyme catalyses adenosine + H2O + H(+) = inosine + NH4(+). It carries out the reaction 2'-deoxyadenosine + H2O + H(+) = 2'-deoxyinosine + NH4(+). Its function is as follows. Catalyzes the hydrolytic deamination of adenosine and 2-deoxyadenosine. The protein is Adenosine deaminase of Mycobacterium marinum (strain ATCC BAA-535 / M).